The chain runs to 51 residues: Sperm protamine P1 (51 aa).

The protein belongs to the protamine P1 family. Testis.

The protein localises to the nucleus. It localises to the chromosome. Its function is as follows. Protamines substitute for histones in the chromatin of sperm during the haploid phase of spermatogenesis. They compact sperm DNA into a highly condensed, stable and inactive complex. This is Sperm protamine P1 (PRM1) from Trachypithecus cristatus (Silvered leaf-monkey).